The sequence spans 156 residues: Small ribosomal subunit protein uS7 (156 aa).

The protein belongs to the universal ribosomal protein uS7 family. In terms of assembly, part of the 30S ribosomal subunit. Contacts proteins S9 and S11.

One of the primary rRNA binding proteins, it binds directly to 16S rRNA where it nucleates assembly of the head domain of the 30S subunit. Is located at the subunit interface close to the decoding center, probably blocks exit of the E-site tRNA. The chain is Small ribosomal subunit protein uS7 from Streptococcus suis (strain 98HAH33).